The following is a 213-amino-acid chain: 3-isopropylmalate dehydratase small subunit (213 aa).

This sequence belongs to the LeuD family. LeuD type 1 subfamily. In terms of assembly, heterodimer of LeuC and LeuD.

It carries out the reaction (2R,3S)-3-isopropylmalate = (2S)-2-isopropylmalate. Its pathway is amino-acid biosynthesis; L-leucine biosynthesis; L-leucine from 3-methyl-2-oxobutanoate: step 2/4. Catalyzes the isomerization between 2-isopropylmalate and 3-isopropylmalate, via the formation of 2-isopropylmaleate. This is 3-isopropylmalate dehydratase small subunit from Pseudomonas syringae pv. tomato (strain ATCC BAA-871 / DC3000).